A 259-amino-acid polypeptide reads, in one-letter code: Triosephosphate isomerase (259 aa).

N10–K12 contacts substrate. H100 acts as the Electrophile in catalysis. Catalysis depends on E172, which acts as the Proton acceptor. Residues G178, S218, and G239–G240 each bind substrate.

It belongs to the triosephosphate isomerase family. As to quaternary structure, homodimer.

It localises to the cytoplasm. The enzyme catalyses D-glyceraldehyde 3-phosphate = dihydroxyacetone phosphate. It participates in carbohydrate biosynthesis; gluconeogenesis. Its pathway is carbohydrate degradation; glycolysis; D-glyceraldehyde 3-phosphate from glycerone phosphate: step 1/1. In terms of biological role, involved in the gluconeogenesis. Catalyzes stereospecifically the conversion of dihydroxyacetone phosphate (DHAP) to D-glyceraldehyde-3-phosphate (G3P). This chain is Triosephosphate isomerase, found in Corynebacterium glutamicum (strain ATCC 13032 / DSM 20300 / JCM 1318 / BCRC 11384 / CCUG 27702 / LMG 3730 / NBRC 12168 / NCIMB 10025 / NRRL B-2784 / 534).